A 29-amino-acid polypeptide reads, in one-letter code: Galanin (29 aa).

A29 carries the post-translational modification Alanine amide.

It belongs to the galanin family.

Its subcellular location is the secreted. Contracts smooth muscle of the gastrointestinal and genitourinary tract, regulates growth hormone release, modulates insulin release, and may be involved in the control of adrenal secretion. The protein is Galanin (gal) of Oncorhynchus mykiss (Rainbow trout).